We begin with the raw amino-acid sequence, 439 residues long: Indole-3-pyruvate monooxygenase YUCCA4 (439 aa).

Residue Gly-49–Gly-54 coordinates FAD. Position 226–231 (Gly-226–Gly-231) interacts with NADP(+).

The protein belongs to the FMO family. The cofactor is FAD.

The enzyme catalyses indole-3-pyruvate + NADPH + O2 + H(+) = (indol-3-yl)acetate + CO2 + NADP(+) + H2O. Involved in auxin biosynthesis in anthers. In Oryza sativa subsp. japonica (Rice), this protein is Indole-3-pyruvate monooxygenase YUCCA4.